Here is a 71-residue protein sequence, read N- to C-terminus: MANLKAVFLICILAFIAFHCVVGAPTAEDSIVVKRSIGTAVKKAVPIAKKVGKVAIPIAKAVLSVVGQLVG.

Residues 1–23 (MANLKAVFLICILAFIAFHCVVG) form the signal peptide. Positions 24–35 (APTAEDSIVVKR) are excised as a propeptide.

Homomer of four to six subunits.

The protein localises to the secreted. Female-specific peptides with potent activity against Gram-positive and Gram-negative bacteria. They have as well hemolytic activity. The chain is Ceratotoxin-D (CTXD) from Ceratitis capitata (Mediterranean fruit fly).